The following is a 30-amino-acid chain: Cycloviolacin-O10 (30 aa).

The cyclopeptide (Gly-Asn) cross-link spans 1 to 30 (GIPCGESCVYIPCLTSAVGCSCKSKVCYRN). 3 disulfides stabilise this stretch: C4–C20, C8–C22, and C13–C27.

In terms of processing, this is a cyclic peptide. As to expression, expressed in petals and roots but not in leaves, petioles and runners (at protein level).

Probably participates in a plant defense mechanism. In Viola odorata (Sweet violet), this protein is Cycloviolacin-O10.